The sequence spans 128 residues: Diacylglycerol kinase (128 aa).

Glu34 contributes to the a divalent metal cation binding site. The next 2 membrane-spanning stretches (helical) occupy residues 35-55 (SAFRQIVILALFCIVLASYLT) and 58-78 (FLEWGLLILPCFLSVVIELIN). Glu75 acts as the Proton acceptor in catalysis. Residue Glu82 participates in a divalent metal cation binding. A helical transmembrane segment spans residues 108–128 (LIGLIFWAFIWGRYLLTLYFN).

The protein belongs to the bacterial diacylglycerol kinase family. Mg(2+) is required as a cofactor.

The protein resides in the cell inner membrane. It carries out the reaction a 1,2-diacyl-sn-glycerol + ATP = a 1,2-diacyl-sn-glycero-3-phosphate + ADP + H(+). Its function is as follows. Catalyzes the ATP-dependent phosphorylation of sn-l,2-diacylglycerol (DAG) to phosphatidic acid. Involved in the recycling of diacylglycerol produced as a by-product during membrane-derived oligosaccharide (MDO) biosynthesis. The chain is Diacylglycerol kinase (dgkA) from Helicobacter pylori (strain J99 / ATCC 700824) (Campylobacter pylori J99).